Here is a 310-residue protein sequence, read N- to C-terminus: Iron ABC transporter substrate-binding lipoprotein MtsA (310 aa).

An N-terminal signal peptide occupies residues 1-20; it reads MGKKMSLILGAFLSVFLLVA. Cysteine 21 is lipidated: N-palmitoyl cysteine. Cysteine 21 carries S-diacylglycerol cysteine lipidation. Fe(2+)-binding residues include histidine 68, histidine 140, glutamate 206, and aspartate 281.

The protein belongs to the bacterial solute-binding protein 9 family. Lipoprotein receptor antigen (Lrai) subfamily.

Its subcellular location is the cell membrane. Its function is as follows. Part of the ATP-binding cassette (ABC) transport system MtsABC involved in iron import. Binds iron with high affinity and specificity and delivers it to the membrane permease for translocation into the cytoplasm. Has low affinity for Zn(2+) and Cu(2+). The chain is Iron ABC transporter substrate-binding lipoprotein MtsA (mtsA) from Streptococcus pyogenes serotype M6 (strain ATCC BAA-946 / MGAS10394).